Here is a 245-residue protein sequence, read N- to C-terminus: Orotidine 5'-phosphate decarboxylase (245 aa).

Residues aspartate 22, lysine 44, 71–80, threonine 131, arginine 192, glutamine 201, glycine 221, and arginine 222 each bind substrate; that span reads DLKFHDIPNT. Catalysis depends on lysine 73, which acts as the Proton donor.

The protein belongs to the OMP decarboxylase family. Type 1 subfamily. In terms of assembly, homodimer.

It catalyses the reaction orotidine 5'-phosphate + H(+) = UMP + CO2. It participates in pyrimidine metabolism; UMP biosynthesis via de novo pathway; UMP from orotate: step 2/2. Catalyzes the decarboxylation of orotidine 5'-monophosphate (OMP) to uridine 5'-monophosphate (UMP). The protein is Orotidine 5'-phosphate decarboxylase of Shigella dysenteriae serotype 1 (strain Sd197).